We begin with the raw amino-acid sequence, 138 residues long: Large ribosomal subunit protein uL16 (138 aa).

A compositionally biased stretch (basic residues) spans 1 to 16; sequence MLIPRRVKHRKQHHPG. The tract at residues 1–24 is disordered; it reads MLIPRRVKHRKQHHPGRSGAATGG.

The protein belongs to the universal ribosomal protein uL16 family. As to quaternary structure, part of the 50S ribosomal subunit.

In terms of biological role, binds 23S rRNA and is also seen to make contacts with the A and possibly P site tRNAs. The sequence is that of Large ribosomal subunit protein uL16 from Arthrobacter sp. (strain FB24).